Reading from the N-terminus, the 1209-residue chain is DNA-directed RNA polymerase subunit beta (1209 aa).

A compositionally biased stretch (basic and acidic residues) spans 1173 to 1192 (QQEKKKLAEEAAKKDDKPDE). A disordered region spans residues 1173 to 1209 (QQEKKKLAEEAAKKDDKPDEPVDESDSSTSSDDKVSK).

The protein belongs to the RNA polymerase beta chain family. The RNAP catalytic core consists of 2 alpha, 1 beta, 1 beta' and 1 omega subunit. When a sigma factor is associated with the core the holoenzyme is formed, which can initiate transcription.

It carries out the reaction RNA(n) + a ribonucleoside 5'-triphosphate = RNA(n+1) + diphosphate. Functionally, DNA-dependent RNA polymerase catalyzes the transcription of DNA into RNA using the four ribonucleoside triphosphates as substrates. In Lactobacillus johnsonii (strain CNCM I-12250 / La1 / NCC 533), this protein is DNA-directed RNA polymerase subunit beta.